The chain runs to 179 residues: Large ribosomal subunit protein uL6 (179 aa).

This sequence belongs to the universal ribosomal protein uL6 family. Part of the 50S ribosomal subunit.

Its function is as follows. This protein binds to the 23S rRNA, and is important in its secondary structure. It is located near the subunit interface in the base of the L7/L12 stalk, and near the tRNA binding site of the peptidyltransferase center. This Mycobacterium leprae (strain Br4923) protein is Large ribosomal subunit protein uL6.